Consider the following 100-residue polypeptide: ATP synthase subunit c (100 aa).

2 helical membrane-spanning segments follow: residues 27–47 (SVIA…IGMG) and 72–92 (FIAL…TLIV).

It belongs to the ATPase C chain family. As to quaternary structure, F-type ATPases have 2 components, F(1) - the catalytic core - and F(0) - the membrane proton channel. F(1) has five subunits: alpha(3), beta(3), gamma(1), delta(1), epsilon(1). F(0) has three main subunits: a(1), b(2) and c(10-14). The alpha and beta chains form an alternating ring which encloses part of the gamma chain. F(1) is attached to F(0) by a central stalk formed by the gamma and epsilon chains, while a peripheral stalk is formed by the delta and b chains.

It localises to the cell inner membrane. In terms of biological role, f(1)F(0) ATP synthase produces ATP from ADP in the presence of a proton or sodium gradient. F-type ATPases consist of two structural domains, F(1) containing the extramembraneous catalytic core and F(0) containing the membrane proton channel, linked together by a central stalk and a peripheral stalk. During catalysis, ATP synthesis in the catalytic domain of F(1) is coupled via a rotary mechanism of the central stalk subunits to proton translocation. Key component of the F(0) channel; it plays a direct role in translocation across the membrane. A homomeric c-ring of between 10-14 subunits forms the central stalk rotor element with the F(1) delta and epsilon subunits. The protein is ATP synthase subunit c of Campylobacter concisus (strain 13826).